Reading from the N-terminus, the 359-residue chain is Nicotinate-nucleotide--dimethylbenzimidazole phosphoribosyltransferase (359 aa).

The active-site Proton acceptor is the E318.

The protein belongs to the CobT family. In terms of assembly, homodimer.

It carries out the reaction 5,6-dimethylbenzimidazole + nicotinate beta-D-ribonucleotide = alpha-ribazole 5'-phosphate + nicotinate + H(+). It participates in nucleoside biosynthesis; alpha-ribazole biosynthesis; alpha-ribazole from 5,6-dimethylbenzimidazole: step 1/2. Catalyzes the synthesis of alpha-ribazole-5'-phosphate from nicotinate mononucleotide (NAMN) and 5,6-dimethylbenzimidazole (DMB). The chain is Nicotinate-nucleotide--dimethylbenzimidazole phosphoribosyltransferase from Escherichia coli O9:H4 (strain HS).